A 231-amino-acid chain; its full sequence is Octanoyl-[acyl-carrier-protein]:protein N-octanoyltransferase LIPT2, mitochondrial (231 aa).

Residues 1–31 (MRQPAVRLVRLGRVPYAELLGLQDRWLRRLQ) constitute a mitochondrion transit peptide. Residues 41-224 (GTEAGALLLC…AFKEIYKCTL (184 aa)) form the BPL/LPL catalytic domain. Substrate-binding positions include 85–92 (RGGLATFH), 154–156 (AIG), and 167–169 (GLA). Cysteine 185 acts as the Acyl-thioester intermediate in catalysis.

It belongs to the LipB family.

The protein localises to the mitochondrion. The catalysed reaction is octanoyl-[ACP] + L-lysyl-[protein] = N(6)-octanoyl-L-lysyl-[protein] + holo-[ACP] + H(+). Its pathway is protein modification; protein lipoylation via endogenous pathway; protein N(6)-(lipoyl)lysine from octanoyl-[acyl-carrier-protein]: step 1/2. Catalyzes the transfer of endogenously produced octanoic acid from octanoyl-acyl-carrier-protein (octanoyl-ACP) onto the lipoyl domains of lipoate-dependent enzymes such as the protein H of the glycine cleavage system (GCSH). Lipoyl-ACP can also act as a substrate although octanoyl-ACP is likely to be the physiological substrate. This is Octanoyl-[acyl-carrier-protein]:protein N-octanoyltransferase LIPT2, mitochondrial from Homo sapiens (Human).